Consider the following 396-residue polypeptide: Elongation factor Tu (396 aa).

The region spanning 10-206 (KPHVNVGTIG…ALDTYIPTPE (197 aa)) is the tr-type G domain. The G1 stretch occupies residues 19–26 (GHVDHGKT). Residue 19 to 26 (GHVDHGKT) participates in GTP binding. Position 26 (Thr-26) interacts with Mg(2+). The segment at 60-64 (GITIN) is G2. A G3 region spans residues 81 to 84 (DCPG). GTP is bound by residues 81–85 (DCPGH) and 136–139 (NKCD). The interval 136 to 139 (NKCD) is G4. Residues 174–176 (SAK) form a G5 region.

This sequence belongs to the TRAFAC class translation factor GTPase superfamily. Classic translation factor GTPase family. EF-Tu/EF-1A subfamily. As to quaternary structure, monomer.

Its subcellular location is the cytoplasm. It carries out the reaction GTP + H2O = GDP + phosphate + H(+). In terms of biological role, GTP hydrolase that promotes the GTP-dependent binding of aminoacyl-tRNA to the A-site of ribosomes during protein biosynthesis. The chain is Elongation factor Tu from Burkholderia cepacia (Pseudomonas cepacia).